We begin with the raw amino-acid sequence, 336 residues long: HTH-type transcriptional regulator SyrM (336 aa).

Residues 41–98 (IDLNLLVALEALLEYRNVTHAGQHIGRSQPAMSRALGRLRGLFNDDLLVRSSTGLIPT) form the HTH lysR-type domain. A DNA-binding region (H-T-H motif) is located at residues 58–77 (VTHAGQHIGRSQPAMSRALG).

It belongs to the LysR transcriptional regulatory family.

Functionally, acts in trans to stimulate nod gene expression via nodD3 and exo gene expression via SyrA. This chain is HTH-type transcriptional regulator SyrM (syrM), found in Rhizobium etli.